The following is a 316-amino-acid chain: Glutathione synthetase (316 aa).

One can recognise an ATP-grasp domain in the interval 125–310 (KLFTAWFSDL…ITGMLMDAIE (186 aa)). N-beta-linked (GlcNAc) arginine glycosylation occurs at R256. Residues E281 and N283 each contribute to the Mg(2+) site.

The protein belongs to the prokaryotic GSH synthase family. The cofactor is Mg(2+). It depends on Mn(2+) as a cofactor.

It carries out the reaction gamma-L-glutamyl-L-cysteine + glycine + ATP = glutathione + ADP + phosphate + H(+). The protein operates within sulfur metabolism; glutathione biosynthesis; glutathione from L-cysteine and L-glutamate: step 2/2. This Escherichia coli O127:H6 (strain E2348/69 / EPEC) protein is Glutathione synthetase.